The following is a 472-amino-acid chain: Adenosylhomocysteinase (472 aa).

Substrate is bound by residues Thr62, Asp137, and Glu197. NAD(+) is bound at residue 198 to 200 (TTT). Positions 227 and 231 each coordinate substrate. NAD(+)-binding positions include Asn232, 261-266 (GYGDVG), Glu284, Asn319, 340-342 (IGH), and Asn385.

The protein belongs to the adenosylhomocysteinase family. NAD(+) serves as cofactor.

The protein localises to the cytoplasm. It catalyses the reaction S-adenosyl-L-homocysteine + H2O = L-homocysteine + adenosine. Its pathway is amino-acid biosynthesis; L-homocysteine biosynthesis; L-homocysteine from S-adenosyl-L-homocysteine: step 1/1. May play a key role in the regulation of the intracellular concentration of adenosylhomocysteine. This Bordetella bronchiseptica (strain ATCC BAA-588 / NCTC 13252 / RB50) (Alcaligenes bronchisepticus) protein is Adenosylhomocysteinase.